The following is a 686-amino-acid chain: Acyl-CoA synthetase short-chain family member 3, mitochondrial (686 aa).

A mitochondrion-targeting transit peptide spans methionine 1 to glycine 29. A CoA-binding site is contributed by glutamate 226–arginine 229. Residues glycine 424–arginine 426 and aspartate 445–threonine 450 contribute to the ATP site. The residue at position 517 (lysine 517) is an N6-succinyllysine. Lysine 523 is subject to N6-acetyllysine. 3 residues coordinate ATP: aspartate 538, arginine 553, and arginine 564. Residue arginine 623 participates in CoA binding.

It belongs to the ATP-dependent AMP-binding enzyme family.

It localises to the mitochondrion matrix. The catalysed reaction is acetate + ATP + CoA = acetyl-CoA + AMP + diphosphate. It carries out the reaction propanoate + ATP + CoA = propanoyl-CoA + AMP + diphosphate. It catalyses the reaction butanoate + ATP + CoA = butanoyl-CoA + AMP + diphosphate. Catalyzes the synthesis of acetyl-CoA from short-chain fatty acids. Propionate is the preferred substrate but can also utilize acetate and butyrate with a much lower affinity. This Bos taurus (Bovine) protein is Acyl-CoA synthetase short-chain family member 3, mitochondrial (ACSS3).